The following is a 319-amino-acid chain: Shiga-like toxin 2 subunit A (319 aa).

A signal peptide spans 1 to 22 (MKCILFKWVLCLLLGFSSVSYS). Residues 23-272 (REFTIDFSTQ…CHHQGARSVR (250 aa)) are A1. E189 is an active-site residue. C263 and C282 form a disulfide bridge. The tract at residues 273 to 314 (AVNEESQPECQITGDRPVIKINNTLWESNTAAAFLNRKSQFL) is A2.

The protein belongs to the ribosome-inactivating protein family. Shiga-like toxin contains a single A subunit and multiple copies of a B subunit.

The protein localises to the secreted. It catalyses the reaction Endohydrolysis of the N-glycosidic bond at one specific adenosine on the 28S rRNA.. In terms of biological role, the A subunit is responsible for inhibiting protein synthesis through the catalytic inactivation of 60S ribosomal subunits. After endocytosis, the A subunit is cleaved by furin in two fragments, A1 and A2: A1 is the catalytically active fragment, and A2 is essential for holotoxin assembly with the B subunits. This chain is Shiga-like toxin 2 subunit A (stxA2), found in Escherichia coli O157:H7 (Bacteriophage 933W).